Here is an 86-residue protein sequence, read N- to C-terminus: Large ribosomal subunit protein eL20 (86 aa).

Belongs to the eukaryotic ribosomal protein eL20 family. In terms of assembly, part of the 50S ribosomal subunit. Binds 23S rRNA.

This Saccharolobus solfataricus (strain ATCC 35092 / DSM 1617 / JCM 11322 / P2) (Sulfolobus solfataricus) protein is Large ribosomal subunit protein eL20.